The primary structure comprises 394 residues: ORC1-type DNA replication protein 3 (394 aa).

Residues 66-70 and Tyr-207 contribute to the ATP site; that span reads TGKTF.

The protein belongs to the CDC6/cdc18 family. Monomer. Interacts with Cdc6-1, Cdc6-2, MCM and PolB1.

Its function is as follows. Involved in regulation of DNA replication. May play essential roles in origin recognition and cell cycle control of replication. Binds to DNA, with a preference for molecules that contain a bubble, a fork, or a tail. Inhibits the binding of the MCM helicase to the origin DNA and inhibits its DNA helicase activity. Also regulates the DNA polymerase and the nuclease activities of PolB1. Inhibits the DNA-binding activity of Cdc6-1 and Cdc6-2. In Saccharolobus solfataricus (strain ATCC 35092 / DSM 1617 / JCM 11322 / P2) (Sulfolobus solfataricus), this protein is ORC1-type DNA replication protein 3 (cdc6-3).